Reading from the N-terminus, the 411-residue chain is Tyrosine--tRNA ligase (411 aa).

Y34 is a binding site for L-tyrosine. The short motif at 39–48 (CTATSLHIGS) is the 'HIGH' region element. L-tyrosine contacts are provided by Y171 and Q175. Residues 231–235 (KMGKT) carry the 'KMSKS' region motif. K234 serves as a coordination point for ATP. Positions 345–411 (ISAYELFHEA…GKKRHILVRV (67 aa)) constitute an S4 RNA-binding domain.

This sequence belongs to the class-I aminoacyl-tRNA synthetase family. TyrS type 1 subfamily. In terms of assembly, homodimer.

It localises to the cytoplasm. It catalyses the reaction tRNA(Tyr) + L-tyrosine + ATP = L-tyrosyl-tRNA(Tyr) + AMP + diphosphate + H(+). Functionally, catalyzes the attachment of tyrosine to tRNA(Tyr) in a two-step reaction: tyrosine is first activated by ATP to form Tyr-AMP and then transferred to the acceptor end of tRNA(Tyr). In Rickettsia felis (strain ATCC VR-1525 / URRWXCal2) (Rickettsia azadi), this protein is Tyrosine--tRNA ligase.